We begin with the raw amino-acid sequence, 203 residues long: Small ribosomal subunit protein uS5 (203 aa).

Residues 1–25 are compositionally biased toward basic and acidic residues; the sequence is MPGRTRRDGGSESGGKDRRDRRDGG. The segment at 1–36 is disordered; sequence MPGRTRRDGGSESGGKDRRDRRDGGRGGAAQEKTPQ. Positions 36–99 constitute an S5 DRBM domain; that stretch reads QFERVVTINR…EEAKKNFFRV (64 aa).

Belongs to the universal ribosomal protein uS5 family. As to quaternary structure, part of the 30S ribosomal subunit. Contacts proteins S4 and S8.

Its function is as follows. With S4 and S12 plays an important role in translational accuracy. Functionally, located at the back of the 30S subunit body where it stabilizes the conformation of the head with respect to the body. This Saccharopolyspora erythraea (strain ATCC 11635 / DSM 40517 / JCM 4748 / NBRC 13426 / NCIMB 8594 / NRRL 2338) protein is Small ribosomal subunit protein uS5.